The sequence spans 365 residues: Chaperone protein DnaJ (365 aa).

Positions 4 to 70 constitute a J domain; it reads DYYKILGVDR…EKRRIYDQTG (67 aa). A CR-type zinc finger spans residues 139 to 220; that stretch reads GTEKRIKFRR…CNGTGTIVVD (82 aa). Residues cysteine 152, cysteine 155, cysteine 168, cysteine 171, cysteine 194, cysteine 197, cysteine 208, and cysteine 211 each contribute to the Zn(2+) site. CXXCXGXG motif repeat units lie at residues 152 to 159, 168 to 175, 194 to 201, and 208 to 215; these read CPDCKGTG, CPTCHGTG, CNTCGGKG, and CPRCNGTG.

The protein belongs to the DnaJ family. Homodimer. Zn(2+) is required as a cofactor.

It localises to the cytoplasm. Its function is as follows. Participates actively in the response to hyperosmotic and heat shock by preventing the aggregation of stress-denatured proteins and by disaggregating proteins, also in an autonomous, DnaK-independent fashion. Unfolded proteins bind initially to DnaJ; upon interaction with the DnaJ-bound protein, DnaK hydrolyzes its bound ATP, resulting in the formation of a stable complex. GrpE releases ADP from DnaK; ATP binding to DnaK triggers the release of the substrate protein, thus completing the reaction cycle. Several rounds of ATP-dependent interactions between DnaJ, DnaK and GrpE are required for fully efficient folding. Also involved, together with DnaK and GrpE, in the DNA replication of plasmids through activation of initiation proteins. This is Chaperone protein DnaJ from Thermoplasma volcanium (strain ATCC 51530 / DSM 4299 / JCM 9571 / NBRC 15438 / GSS1).